Consider the following 590-residue polypeptide: Tape measure protein (590 aa).

Disordered regions lie at residues 1–35, 147–185, and 515–535; these read MKKP…LSGL, ESVG…EEKQ, and LKKN…EAKQ. Basic and acidic residues predominate over residues 176 to 185; it reads PKQESPEEKQ.

Its subcellular location is the virion. Serves as a base for tail tube protein polymerization and acts as a template for tail length determination. This is Tape measure protein (29) from Escherichia coli (Bacteriophage T4).